The primary structure comprises 191 residues: Adenylate kinase (191 aa).

Position 12 to 17 (12 to 17) interacts with ATP; that stretch reads GSGKTT. The NMP stretch occupies residues 34–63; the sequence is STGDLLRAESAKKTERGLLIEKFTSQGELV. Residues Thr35, Arg40, 61–63, 88–91, and Gln95 each bind AMP; these read ELV and GYPR. The tract at residues 130–136 is LID; the sequence is GRSRGAD. Arg131 is an ATP binding site. AMP-binding residues include Arg133 and Arg145. Position 173 (Arg173) interacts with ATP.

This sequence belongs to the adenylate kinase family. Monomer.

The protein localises to the cytoplasm. It carries out the reaction AMP + ATP = 2 ADP. It functions in the pathway purine metabolism; AMP biosynthesis via salvage pathway; AMP from ADP: step 1/1. In terms of biological role, catalyzes the reversible transfer of the terminal phosphate group between ATP and AMP. Plays an important role in cellular energy homeostasis and in adenine nucleotide metabolism. In Helicobacter pylori (strain ATCC 700392 / 26695) (Campylobacter pylori), this protein is Adenylate kinase.